The following is a 206-amino-acid chain: ATP phosphoribosyltransferase (206 aa).

This sequence belongs to the ATP phosphoribosyltransferase family. Short subfamily. In terms of assembly, heteromultimer composed of HisG and HisZ subunits.

It is found in the cytoplasm. It catalyses the reaction 1-(5-phospho-beta-D-ribosyl)-ATP + diphosphate = 5-phospho-alpha-D-ribose 1-diphosphate + ATP. It participates in amino-acid biosynthesis; L-histidine biosynthesis; L-histidine from 5-phospho-alpha-D-ribose 1-diphosphate: step 1/9. In terms of biological role, catalyzes the condensation of ATP and 5-phosphoribose 1-diphosphate to form N'-(5'-phosphoribosyl)-ATP (PR-ATP). Has a crucial role in the pathway because the rate of histidine biosynthesis seems to be controlled primarily by regulation of HisG enzymatic activity. The sequence is that of ATP phosphoribosyltransferase from Geobacillus sp. (strain WCH70).